The primary structure comprises 1779 residues: MAENVQNPPVEPLAVIGMSCRFAPDLDTPGRLWEFLRAGGSAVGEMPDRRWDPYVTDSRTRDILRTTTRKGSFMRDIEGFDAEFFQITPREAEYIDPQQRIMLELAWEALCDAGLPPTSLAGTDASVYVAANSNDYGRRLLEDLDRTGAWAVNGTTFYGIANRISYFLDAHGPSMAVDTACAGSLTALHVAGQALHRGETSVAIVGGINIMASPALVVALDAASATSPDGRSKSFDKAADGYGRGEGGGVVVLKRLSDAVRDGDPVHGLVLASGVFQDGRSDGMMAPNGSAQQRMLEEIYRRSGIDPGTVQYVEAHGTGTQLGDAAEAQAIGNVFGPGRDGDNPLLIGTLKPNVGHVEAASGIAGVIKVLLGMRHGELPPSPHEEPDPGLGLEARGLRLVAEPTPWPRGEHGMRAGVSSYGVGGSIAHAVLQQAPPRPDRTERPAAAATGRPQVFPLSAASEQGVRGLAGSVAAWLRAHPETALDDLAHTFTARRSHLSRRAAVVAGTTEELLGGLDALAGGEKSPAVALASASGFGDGGAAGPAWVFSGHGAQWSGMGRELLTTEPVFAQVIDELAPVFSEELGWTPREAIEAGGPWTVVRTQAMTFAMQVALAEVWSDLGLRPGAIIGHSVGEIAAAAVAGSLDRAEAARFACRRARALGKIAGRGAMAMVPMAFADVEQRVAGRDAVVAAIAASPLSTVVSGDTAAVEALLADLEADGIQARRVNTDVAFHSPHVQEILDEVRQAAAALRAGTPRVTLYSTALADPRSDAPREGEYWATNLADPVRFHQAVRAALDDGTRVFLEVSSHPVVAHSITETALDAGVPDAHVAITLRREQPEQRTVLANLARLHSLGTPVTWSYDGDLVDVPAVRWQHKPYWIFPDTAPEQGAGLGHDPQTHTLIGARTTVASAPVQRVWQTELHMENRPYAQSHKVVGVETVPASVVLNSFITAATNEGERACGLRDIVFRIPLAAHPTRVVQVVLEQDKVRIASRIKRDQESGGVRDDEWLTHTTATVVHEPEVGARPMEDPDVIRARCPVSWTWAKVDGIFRTMGVDGYTFPWVVEELLRGEDEQFSTITVDHTPKLHPSSWTAVVDAALTASGVLVMDENSNVLRTCSHLESLSFVGPPPPRIHVHTVRDPRTPDTISMTVADESGAVVCEARGLRYVKVQDIGSGAVGPRDLVHELAWEPVEVPADAPVPSQALVVGGAAGGPALVEALTARGVRARAVPDATAIGDASLTCADVVVVAPEALLPGEAPEQAARRCAQLLVDAVQQVAAVPDERRRPRVWALTREVRAGATEAALAHAPLWGAGRIVAGERPDLWGGVIDVAENAVPQQVASLIGALPHTEDVLSLDSEGVTAARLRQVARPAEREPVDCRPDGTYLVTGGLGALGLEAARHLVEQGARRLVLIGRRGLPSRSRWDQVDDPAVAAQIAEVVALEAAGATVRVLSLDISDAEATARALDPGALDMPPVRGIVHCAGVVSDALVEKTGAANLDTTMGPKADGAMVLHRLFPAGTLDFFTMFSSCGQLARLTGQVSYASANSFLDALAALRRSRGETGTTSFAWAQWIGRGMGETTGRATILEAESRGLGGITVSEALRSWAYADRFALPYAAVMRVMPDHTLPVFSHLSVTDAGAQSADAGGVDWATVPAGELPELVLKVTHEQVAAELNLAVDDIAIDQPLLELGVDSVLTVALRVRLHRCFAVDLPPTILWSNPTVRALAEFLAAEVGGATADAEETDPVAGLPAPQQGSGTAEQLDAVAAAAG.

The Ketosynthase family 3 (KS3) domain maps to 10 to 433 (VEPLAVIGMS…GSIAHAVLQQ (424 aa)). Active-site for beta-ketoacyl synthase activity residues include C181, H316, and H356. The N-terminal hotdog fold stretch occupies residues 902–1027 (HTLIGARTTV…ATVVHEPEVG (126 aa)). Residues 902-1180 (HTLIGARTTV…YVKVQDIGSG (279 aa)) enclose the PKS/mFAS DH domain. The tract at residues 1042–1180 (PVSWTWAKVD…YVKVQDIGSG (139 aa)) is C-terminal hotdog fold. In terms of domain architecture, Carrier spans 1664–1742 (GELPELVLKV…ALAEFLAAEV (79 aa)). O-(pantetheine 4'-phosphoryl)serine is present on S1702. Residues 1746-1771 (TADAEETDPVAGLPAPQQGSGTAEQL) are disordered.

The catalysed reaction is 5 malonyl-CoA + acetyl-CoA + 3 NADPH + 7 H(+) = 5-methyl-1-naphthoate + 5 CO2 + 3 NADP(+) + 6 CoA + 4 H2O. It functions in the pathway antibiotic biosynthesis. In terms of biological role, polyketide synthase that catalyzes the biosynthesis of the bicyclic aromatic compound 5-methyl-1-naphthoate in the biosynthesis of the antitumor antibiotic azinomycin B. The sequence is that of 5-methyl-1-naphthoate synthase from Streptomyces sahachiroi.